Here is a 744-residue protein sequence, read N- to C-terminus: Glucosamine inositolphosphorylceramide transferase 1 (744 aa).

A run of 3 helical transmembrane segments spans residues 31–51 (FLVA…WLVV), 378–398 (SLFG…VGFV), and 460–480 (LFFC…VHFL). Residues asparagine 534, 558–563 (NSLNNR), 579–581 (DDD), arginine 609, and 665–669 (FNCED) each bind substrate. Aspartate 581 is a binding site for Mn(2+). The cysteines at positions 667 and 718 are disulfide-linked. Residue aspartate 669 is part of the active site.

The protein belongs to the glycosyltransferase 64 family. It depends on Mn(2+) as a cofactor.

It localises to the membrane. The protein operates within sphingolipid metabolism. Functionally, essential protein. Glycosyltransferase that mediates the glycosylation of glycosylinositol phosphorylceramides (GIPCs), the major sphingolipids in the plasma membrane; acts as a HexN(Ac)-specific GIPC sugar transferase. Responsible for the glycosylation of a subgroup of GIPCs found in seeds and pollen that contain GlcNAc and GlcN (GlcN(Ac)). Maybe involved in the maintenance of cell-cell adhesion. This is Glucosamine inositolphosphorylceramide transferase 1 from Oryza sativa subsp. indica (Rice).